The sequence spans 292 residues: Nucleotide-binding protein azo0399 (292 aa).

Residue 8–15 (GLSGSGKS) participates in ATP binding. 57–60 (DMRS) contacts GTP.

This sequence belongs to the RapZ-like family.

Displays ATPase and GTPase activities. This is Nucleotide-binding protein azo0399 from Azoarcus sp. (strain BH72).